A 172-amino-acid chain; its full sequence is Translationally-controlled tumor protein (172 aa).

A TCTP domain is found at 1–172 (MIIYRDLISH…FKDGLEMEKC (172 aa)). 2 positions are modified to phosphoserine: Ser-46 and Ser-53. A Phosphoserine; by PLK1 modification is found at Ser-64. The tract at residues 70 to 172 (VDIVMNHHLQ…FKDGLEMEKC (103 aa)) is required for reduction of TSC22D1 protein stability.

This sequence belongs to the TCTP family. As to quaternary structure, homodimer. Interacts with STEAP3. Interacts with TSC22D1; interaction results in the destabilization of TSC22D1 protein.

The protein resides in the cytoplasm. Its function is as follows. Involved in calcium binding and microtubule stabilization. Acts as a negative regulator of TSC22D1-mediated apoptosis, via interaction with and destabilization of TSC22D1 protein. In Mus musculus (Mouse), this protein is Translationally-controlled tumor protein (Tpt1).